Reading from the N-terminus, the 279-residue chain is Elongation factor Ts (279 aa).

Residues 80 to 83 are involved in Mg(2+) ion dislocation from EF-Tu; sequence TDFV.

It belongs to the EF-Ts family.

It localises to the cytoplasm. Its function is as follows. Associates with the EF-Tu.GDP complex and induces the exchange of GDP to GTP. It remains bound to the aminoacyl-tRNA.EF-Tu.GTP complex up to the GTP hydrolysis stage on the ribosome. In Borrelia garinii subsp. bavariensis (strain ATCC BAA-2496 / DSM 23469 / PBi) (Borreliella bavariensis), this protein is Elongation factor Ts.